A 620-amino-acid chain; its full sequence is Glutathione-regulated potassium-efflux system protein KefC (620 aa).

The next 12 membrane-spanning stretches (helical) occupy residues 4 to 24 (HTLMQALIYLGSAALIVPIAV), 26 to 46 (LGLGSVLGYLIAGCIIGPWGL), 54 to 74 (SILHFAEIGVVLMLFVIGLEL), 90 to 110 (GALQMVICGGLIGFFCMFLGL), 114 to 134 (VAELIGMTLALSSTAIAMQAM), 149 to 169 (FAVLLFQDIAAIPLVAMIPLL), 178 to 198 (LGAFALSALKVAGALALVVLL), 218 to 238 (VFSAVALFLVFGFGLLLEEVG), 270 to 290 (GLLLGLFFIGVGMSIDFGTLV), 294 to 314 (LRILLLLAGFLAIKIVMLWLI), 327 to 347 (WFAVLLGQGSEFAFVVFGAAQ), and 359 to 379 (ALTLAVALSMAATPIFLVLLT). An RCK N-terminal domain is found at 399–518 (QPRVIVAGFG…AGVAMPERET (120 aa)). The disordered stretch occupies residues 599–620 (QGTAEGKHTGDIADEPQVKPST).

Belongs to the monovalent cation:proton antiporter 2 (CPA2) transporter (TC 2.A.37) family. KefC subfamily. Homodimer. Interacts with the regulatory subunit KefF.

The protein resides in the cell inner membrane. Its function is as follows. Pore-forming subunit of a potassium efflux system that confers protection against electrophiles. Catalyzes K(+)/H(+) antiport. The protein is Glutathione-regulated potassium-efflux system protein KefC of Salmonella arizonae (strain ATCC BAA-731 / CDC346-86 / RSK2980).